We begin with the raw amino-acid sequence, 120 residues long: Large ribosomal subunit protein bL12 (120 aa).

This sequence belongs to the bacterial ribosomal protein bL12 family. In terms of assembly, homodimer. Part of the ribosomal stalk of the 50S ribosomal subunit. Forms a multimeric L10(L12)X complex, where L10 forms an elongated spine to which 2 to 4 L12 dimers bind in a sequential fashion. Binds GTP-bound translation factors.

Forms part of the ribosomal stalk which helps the ribosome interact with GTP-bound translation factors. Is thus essential for accurate translation. This Brevibacillus brevis (strain 47 / JCM 6285 / NBRC 100599) protein is Large ribosomal subunit protein bL12.